The primary structure comprises 329 residues: MADMSPRTDTSTDDTDDNHMLEPGQLALAAASDSDRSKDKHEDQKTLRRLAQNREAARKSRLRKKAYVQQLENSRLKLTQLEQELQRARQQGIFISSSVDQTHSMSGNGALAFDMEYARWLEEHNRQINELRSAVNAHAGDNELRGVVDKIMSHYEEIFKQKGNAAKADVFHVLSGMWKTPAERCFLWLGGFRPSELLKLLSTQLEPLTEQQLSGIANLQQSSQQAEDALSQGMEALQQSLAETLAGSLGSSGSTGNVANYMGQMAMAMGKLGTLENFLRQADNLRQQTLQQMQRILTTRQSARALLVISDYSSRLRALSSLWLARPKE.

The disordered stretch occupies residues 1 to 48 (MADMSPRTDTSTDDTDDNHMLEPGQLALAAASDSDRSKDKHEDQKTLR). Over residues 33 to 46 (DSDRSKDKHEDQKT) the composition is skewed to basic and acidic residues. The 45-residue stretch at 43 to 87 (DQKTLRRLAQNREAARKSRLRKKAYVQQLENSRLKLTQLEQELQR) folds into the bZIP domain. Residues 45 to 65 (KTLRRLAQNREAARKSRLRKK) form a basic motif region. A leucine-zipper region spans residues 71–85 (LENSRLKLTQLEQEL). Residues 110 to 326 (ALAFDMEYAR…RALSSLWLAR (217 aa)) form the DOG1 domain.

This sequence belongs to the bZIP family. As to quaternary structure, interacts with NPR1/NH1 and NPR3/NH3.

The protein localises to the nucleus. Its function is as follows. Transcriptional regulator involved in defense response. The chain is Transcription factor TGA2.3 from Oryza sativa subsp. japonica (Rice).